Here is a 655-residue protein sequence, read N- to C-terminus: p-hydroxybenzoic acid efflux pump subunit AaeB (655 aa).

A run of 11 helical transmembrane segments spans residues 13 to 33 (FAVK…HFQL), 38 to 58 (WAVL…GGEP), 69 to 89 (LRII…IAMI), 93 to 113 (LLMI…SSLV), 121 to 141 (WGLA…EPLL), 152 to 172 (EIVI…PRSI), 370 to 390 (LFWL…IAVV), 407 to 427 (FIYG…VIIP), 431 to 451 (QSML…GIEV), 459 to 479 (MGAL…TFHF), and 482 to 502 (FLDS…VILL).

It belongs to the aromatic acid exporter ArAE (TC 2.A.85) family.

It is found in the cell inner membrane. Forms an efflux pump with AaeA. Could function as a metabolic relief valve, allowing to eliminate certain compounds when they accumulate to high levels in the cell. This Shigella boydii serotype 18 (strain CDC 3083-94 / BS512) protein is p-hydroxybenzoic acid efflux pump subunit AaeB.